Consider the following 275-residue polypeptide: Large ribosomal subunit protein uL2 (275 aa).

Disordered stretches follow at residues Met-1–Ile-24 and Ala-208–Arg-275. Positions Gly-12–Ser-22 are enriched in polar residues. 2 stretches are compositionally biased toward basic residues: residues Ala-208–Gln-219 and Leu-255–Arg-275.

This sequence belongs to the universal ribosomal protein uL2 family. As to quaternary structure, part of the 50S ribosomal subunit. Forms a bridge to the 30S subunit in the 70S ribosome.

In terms of biological role, one of the primary rRNA binding proteins. Required for association of the 30S and 50S subunits to form the 70S ribosome, for tRNA binding and peptide bond formation. It has been suggested to have peptidyltransferase activity; this is somewhat controversial. Makes several contacts with the 16S rRNA in the 70S ribosome. This chain is Large ribosomal subunit protein uL2, found in Picosynechococcus sp. (strain ATCC 27264 / PCC 7002 / PR-6) (Agmenellum quadruplicatum).